The primary structure comprises 199 residues: Cell division protein SepF (199 aa).

Residues 15–79 (TEDGDETEVQ…PQPQQKSSTE (65 aa)) are disordered.

The protein belongs to the SepF family. As to quaternary structure, homodimer. Interacts with FtsZ.

It is found in the cytoplasm. In terms of biological role, cell division protein that is part of the divisome complex and is recruited early to the Z-ring. Probably stimulates Z-ring formation, perhaps through the cross-linking of FtsZ protofilaments. Its function overlaps with FtsA. In Streptococcus sanguinis (strain SK36), this protein is Cell division protein SepF.